Consider the following 277-residue polypeptide: 5'-nucleotidase SurE (277 aa).

A divalent metal cation contacts are provided by Asp-16, Asp-17, Ser-48, and Asn-101.

Belongs to the SurE nucleotidase family. Requires a divalent metal cation as cofactor.

The protein resides in the cytoplasm. The catalysed reaction is a ribonucleoside 5'-phosphate + H2O = a ribonucleoside + phosphate. In terms of biological role, nucleotidase that shows phosphatase activity on nucleoside 5'-monophosphates. The polypeptide is 5'-nucleotidase SurE (Parvibaculum lavamentivorans (strain DS-1 / DSM 13023 / NCIMB 13966)).